The chain runs to 215 residues: Fanconi anemia core complex-associated protein 24 (215 aa).

The ruvA domain 2-like stretch occupies residues 160-215 (LRTVQQIPGVGKVKAPLLLQKFPSIQQLSNASIGELEQVVGQAVAQQIHAFFTQPR).

Belongs to the multisubunit FA complex composed of FANCA, FANCB, FANCC, FANCE, FANCF, FANCG, FANCL/PHF9, FANCM and FAAP24. Interacts with FANCM.

It is found in the nucleus. Functionally, plays a role in DNA repair through recruitment of the FA core complex to damaged DNA. Regulates FANCD2 monoubiquitination upon DNA damage. Induces chromosomal instability as well as hypersensitivity to DNA cross-linking agents, when repressed. Targets FANCM/FAAP24 complex to the DNA, preferentially to single strand DNA. This is Fanconi anemia core complex-associated protein 24 from Homo sapiens (Human).